We begin with the raw amino-acid sequence, 135 residues long: Calcium-binding protein KIC (135 aa).

Residues 74–109 form the EF-hand domain; the sequence is MSKEDAQGMVREGDLDGDGALNQTEFCVLMVRLSPE. Residues aspartate 87, aspartate 89, aspartate 91, and glutamate 98 each contribute to the Ca(2+) site.

Interacts with KCBP (via C-terminus). KIC and calmodulin show competitive binding to KCBP. Interacts with CML42. Binds to ABCG36. As to expression, expressed in stems, leaves and flowers.

Functionally, calcium-binding regulatory protein that interacts with kinesin motor protein KCBP in a calcium-dependent manner. Inhibits KCBP microtubule binding activity and microtubule-stimulated ATPase activity. Involved in the regulation of trichome branching through its interaction with KCBP. This is Calcium-binding protein KIC from Arabidopsis thaliana (Mouse-ear cress).